We begin with the raw amino-acid sequence, 393 residues long: Methylthioribose-1-phosphate isomerase (393 aa).

The active-site Proton donor is Asp265.

It belongs to the eIF-2B alpha/beta/delta subunits family. MtnA subfamily.

It is found in the cytoplasm. Its subcellular location is the nucleus. The enzyme catalyses 5-(methylsulfanyl)-alpha-D-ribose 1-phosphate = 5-(methylsulfanyl)-D-ribulose 1-phosphate. It functions in the pathway amino-acid biosynthesis; L-methionine biosynthesis via salvage pathway; L-methionine from S-methyl-5-thio-alpha-D-ribose 1-phosphate: step 1/6. Catalyzes the interconversion of methylthioribose-1-phosphate (MTR-1-P) into methylthioribulose-1-phosphate (MTRu-1-P). This is Methylthioribose-1-phosphate isomerase from Cryptococcus neoformans var. neoformans serotype D (strain JEC21 / ATCC MYA-565) (Filobasidiella neoformans).